Here is a 424-residue protein sequence, read N- to C-terminus: O-seryl-dTMP PLP-dependent decarboxylase (424 aa).

Belongs to the pyridoxal-phosphate-dependent aminodecarboxylase family.

It carries out the reaction 5-O-(L-seryl)-dTMP in DNA + H(+) = 5-aminoethoxy-methyl-dUMP in DNA + CO2. Converts 5-O-serinylthymidine (O-SerT) into 5-aminoethoxy-2'-deoxymethyluridine (5-NeOmdU) as a step in the pathway leading to thymidine hypermodifications in the viral genome. As a final result of the pathway of hypermodification, 5-NeOmdU substitutes for about 40% of the thymidines in the viral DNA. These modifications probably prevent degradation of viral genome by the host restriction-modification antiviral defense system. This Salmonella phage ViI protein is O-seryl-dTMP PLP-dependent decarboxylase.